The primary structure comprises 489 residues: Rhamnulokinase (489 aa).

13-17 (ASSGR) is an ATP binding site. Cysteine 68 and cysteine 222 are oxidised to a cystine. Substrate-binding positions include glycine 83 and 236-238 (HDT). Aspartate 237 acts as the Proton acceptor in catalysis. Residue threonine 259 participates in ATP binding. Asparagine 296 provides a ligand contact to substrate. Glutamine 304 contributes to the ATP binding site. The cysteines at positions 353 and 370 are disulfide-linked. Glycine 402 is a binding site for ATP. A disulfide bridge connects residues cysteine 413 and cysteine 417.

It belongs to the rhamnulokinase family. Mg(2+) is required as a cofactor.

The catalysed reaction is L-rhamnulose + ATP = L-rhamnulose 1-phosphate + ADP + H(+). Its pathway is carbohydrate degradation; L-rhamnose degradation; glycerone phosphate from L-rhamnose: step 2/3. Its function is as follows. Involved in the catabolism of L-rhamnose (6-deoxy-L-mannose). Catalyzes the transfer of the gamma-phosphate group from ATP to the 1-hydroxyl group of L-rhamnulose to yield L-rhamnulose 1-phosphate. The protein is Rhamnulokinase of Salmonella typhimurium (strain LT2 / SGSC1412 / ATCC 700720).